A 435-amino-acid chain; its full sequence is Histidine--tRNA ligase (435 aa).

Belongs to the class-II aminoacyl-tRNA synthetase family. In terms of assembly, homodimer.

It is found in the cytoplasm. It carries out the reaction tRNA(His) + L-histidine + ATP = L-histidyl-tRNA(His) + AMP + diphosphate + H(+). This chain is Histidine--tRNA ligase, found in Synechococcus sp. (strain ATCC 27144 / PCC 6301 / SAUG 1402/1) (Anacystis nidulans).